A 545-amino-acid polypeptide reads, in one-letter code: MIRPLPPELRGLLARGEVLLTVKDAVRELLENALDAGARRVRVELWGGGLKRLVVEDDGEGIPLEDLPLAVEPYATSKLQDLEGIRTLGFRGQALYALRQAARLRIRSRPRGQLGGGLLLAEGERVEVRPVPAPPGTRVEVEGLFLGEGRDPKGEVRGVLELLKRYLLHHPRLALALFAEGEARLLFPGAGLEEAARLAFGRLLAKRLLPLAYGAGGLEVQGLVSRPEVSRTRPDRLFLAVNGRPVAFPEGLLRRVRRAYRELLPEGHYPVGVLNLFLPQEAFRLRLDARKEEVVLSEEVEALVEEALLALFRRENLARALPEPKPLQPLSPPTASGLPRLRFLAQFRESYLLAEAGDTLYVVDQHAAHERILYEDLLKRVAEGPKPLPRPLLVPLAPEEEALLEAGQEALAALFRWEPFGPGRVRLLMAPAFLHPYPLLLPEVFKEALRGEGRSLKALLARLACLPAVKAGHPLGEAQGQALLDALLACETPWACPHGRPVLLALKEEDLIRRFGRRSGARGGGEARPRPQEESFPEAPLPREP.

Residues 517–545 form a disordered region; the sequence is RRSGARGGGEARPRPQEESFPEAPLPREP.

This sequence belongs to the DNA mismatch repair MutL/HexB family.

In terms of biological role, this protein is involved in the repair of mismatches in DNA. It is required for dam-dependent methyl-directed DNA mismatch repair. May act as a 'molecular matchmaker', a protein that promotes the formation of a stable complex between two or more DNA-binding proteins in an ATP-dependent manner without itself being part of a final effector complex. This Thermus thermophilus (strain ATCC 27634 / DSM 579 / HB8) protein is DNA mismatch repair protein MutL.